The sequence spans 702 residues: Phosphatase and actin regulator 4 (702 aa).

3 disordered regions span residues 1–38 (MEDPFEEADQPATEPGMVMDSVEAGDTTPPTKRKSKFS), 82–194 (GVLL…SSGG), and 222–363 (NLSV…PFPA). An RPEL 1 repeat occupies 63 to 88 (EVLERKISMRKPREELVKRGVLLEDP). The span at 106-120 (GHTTPIGNARSSSPV) shows a compositional bias: polar residues. Phosphoserine occurs at positions 116, 118, 131, and 147. Polar residues predominate over residues 147-156 (STGSQPNSEA). The segment covering 163-173 (VPKPPLLPPKR) has biased composition (pro residues). Residues 233-250 (TLPAAPASTNTTATPSLT) are compositionally biased toward low complexity. 2 positions are modified to phosphoserine: serine 270 and serine 291. A compositionally biased stretch (polar residues) spans 301–318 (PSTSVPTLESAAAITTKT). Serine 342 and serine 344 each carry phosphoserine. Residues 342–362 (SPSPPLPTHIPPEPPRTPPFP) are compositionally biased toward pro residues. The residue at position 358 (threonine 358) is a Phosphothreonine. Serine 427 is modified (phosphoserine). The residue at position 432 (threonine 432) is a Phosphothreonine. A phosphoserine mark is found at serine 443, serine 453, and serine 464. Residues 473–536 (KVPDDEEEEE…EEDEDESYQS (64 aa)) form a disordered region. The span at 486-497 (PSTFSEETTPTS) shows a compositional bias: low complexity. The span at 508–518 (EEEEKESDSDS) shows a compositional bias: acidic residues. Phosphoserine is present on residues serine 514, serine 516, serine 557, and serine 590. 2 RPEL repeats span residues 583–608 (NTLIRRLSQRPTPEELEQRNILQPKN) and 621–646 (RRLTRKLSQRPTVAELLARKILRFNE). Residues 592 to 615 (RPTPEELEQRNILQPKNEADRQAE) are disordered. At serine 628 the chain carries Phosphoserine.

It belongs to the phosphatase and actin regulator family. Binds PPP1CA and actin.

It is found in the cytoplasm. Its subcellular location is the cell projection. It localises to the lamellipodium. Regulator of protein phosphatase 1 (PP1) required for neural tube and optic fissure closure, and enteric neural crest cell (ENCCs) migration during development. Acts as an activator of PP1 by interacting with PPP1CA and preventing phosphorylation of PPP1CA at 'Thr-320'. During neural tube closure, localizes to the ventral neural tube and activates PP1, leading to down-regulate cell proliferation within cranial neural tissue and the neural retina. Also acts as a regulator of migration of enteric neural crest cells (ENCCs) by activating PP1, leading to dephosphorylation and subsequent activation of cofilin (COF1 or COF2) and repression of the integrin signaling through the RHO/ROCK pathway. The sequence is that of Phosphatase and actin regulator 4 (PHACTR4) from Pongo abelii (Sumatran orangutan).